The primary structure comprises 154 residues: Small heat shock protein IbpB (154 aa).

Residues 26–137 (GQEPQGFPPY…QPQRIAIGSA (112 aa)) form the sHSP domain.

Belongs to the small heat shock protein (HSP20) family. Homodimer. Forms homomultimers of about 100-150 subunits at optimal growth temperatures. Conformation changes to oligomers at high temperatures or high ionic concentrations. The decrease in size of the multimers is accompanied by an increase in chaperone activity.

The protein resides in the cytoplasm. Associates with aggregated proteins, together with IbpA, to stabilize and protect them from irreversible denaturation and extensive proteolysis during heat shock and oxidative stress. Aggregated proteins bound to the IbpAB complex are more efficiently refolded and reactivated by the ATP-dependent chaperone systems ClpB and DnaK/DnaJ/GrpE. Its activity is ATP-independent. This is Small heat shock protein IbpB from Yersinia pseudotuberculosis serotype O:1b (strain IP 31758).